Consider the following 281-residue polypeptide: Formamidopyrimidine-DNA glycosylase (281 aa).

P2 serves as the catalytic Schiff-base intermediate with DNA. E3 functions as the Proton donor in the catalytic mechanism. Residue K58 is the Proton donor; for beta-elimination activity of the active site. H100, R119, and R160 together coordinate DNA. The FPG-type zinc-finger motif lies at 245-281 (RVYGREGAPCPTPGCTGTVQRIVQSGRSSFFCPLCQQ). R271 (proton donor; for delta-elimination activity) is an active-site residue.

This sequence belongs to the FPG family. As to quaternary structure, monomer. Zn(2+) serves as cofactor.

The catalysed reaction is Hydrolysis of DNA containing ring-opened 7-methylguanine residues, releasing 2,6-diamino-4-hydroxy-5-(N-methyl)formamidopyrimidine.. The enzyme catalyses 2'-deoxyribonucleotide-(2'-deoxyribose 5'-phosphate)-2'-deoxyribonucleotide-DNA = a 3'-end 2'-deoxyribonucleotide-(2,3-dehydro-2,3-deoxyribose 5'-phosphate)-DNA + a 5'-end 5'-phospho-2'-deoxyribonucleoside-DNA + H(+). In terms of biological role, involved in base excision repair of DNA damaged by oxidation or by mutagenic agents. Acts as a DNA glycosylase that recognizes and removes damaged bases. Has a preference for oxidized purines, such as 7,8-dihydro-8-oxoguanine (8-oxoG). Has AP (apurinic/apyrimidinic) lyase activity and introduces nicks in the DNA strand. Cleaves the DNA backbone by beta-delta elimination to generate a single-strand break at the site of the removed base with both 3'- and 5'-phosphates. The sequence is that of Formamidopyrimidine-DNA glycosylase from Paracoccus denitrificans (strain Pd 1222).